The chain runs to 385 residues: 1-deoxy-D-xylulose 5-phosphate reductoisomerase (385 aa).

Thr-10, Gly-11, Ser-12, Ile-13, Gly-36, Asn-38, and Asn-122 together coordinate NADPH. 1-deoxy-D-xylulose 5-phosphate is bound at residue Lys-123. Glu-124 contacts NADPH. Residue Asp-148 participates in Mn(2+) binding. 1-deoxy-D-xylulose 5-phosphate contacts are provided by Ser-149, Glu-150, Ser-174, and His-197. Position 150 (Glu-150) interacts with Mn(2+). Residue Gly-203 participates in NADPH binding. Ser-210, Asn-215, Lys-216, and Glu-219 together coordinate 1-deoxy-D-xylulose 5-phosphate. Glu-219 contacts Mn(2+).

It belongs to the DXR family. Requires Mg(2+) as cofactor. Mn(2+) is required as a cofactor.

It carries out the reaction 2-C-methyl-D-erythritol 4-phosphate + NADP(+) = 1-deoxy-D-xylulose 5-phosphate + NADPH + H(+). It functions in the pathway isoprenoid biosynthesis; isopentenyl diphosphate biosynthesis via DXP pathway; isopentenyl diphosphate from 1-deoxy-D-xylulose 5-phosphate: step 1/6. Functionally, catalyzes the NADPH-dependent rearrangement and reduction of 1-deoxy-D-xylulose-5-phosphate (DXP) to 2-C-methyl-D-erythritol 4-phosphate (MEP). This Geobacter sp. (strain M21) protein is 1-deoxy-D-xylulose 5-phosphate reductoisomerase.